Here is a 223-residue protein sequence, read N- to C-terminus: N-acetylmuramate alpha-1-phosphate uridylyltransferase (223 aa).

UTP-binding positions include 11 to 13 (GER) and Lys23. Asn105 contacts substrate. Asp107 provides a ligand contact to Mg(2+). The substrate site is built by Asp140 and Asp205. Asp205 is a Mg(2+) binding site.

The protein belongs to the nucleotidyltransferase MurU family. Monomer. Requires Mg(2+) as cofactor.

The enzyme catalyses N-acetyl-alpha-D-muramate 1-phosphate + UDP + H(+) = UDP-N-acetyl-alpha-D-muramate + phosphate. Its pathway is cell wall biogenesis; peptidoglycan recycling. With respect to regulation, is completely inhibited by EDTA in vitro. Functionally, catalyzes the formation of UDP-N-acetylmuramate (UDP-MurNAc), a crucial precursor of the bacterial peptidoglycan cell wall, from UTP and MurNAc-alpha-1P. Is involved in peptidoglycan recycling as part of a cell wall recycling pathway that bypasses de novo biosynthesis of the peptidoglycan precursor UDP-MurNAc. Plays a role in intrinsic resistance to fosfomycin, which targets the de novo synthesis of UDP-MurNAc. Is not able to use GlcNAc-alpha-1P and GalNAc-alpha-1P as substrates. Cannot accept other nucleotide triphosphates (ATP, CTP, TTP, or GTP) than UTP. This Pseudomonas putida (strain ATCC 47054 / DSM 6125 / CFBP 8728 / NCIMB 11950 / KT2440) protein is N-acetylmuramate alpha-1-phosphate uridylyltransferase.